The following is a 629-amino-acid chain: Ras GTPase-activating protein gap-1 (629 aa).

The 216-residue stretch at 183–398 folds into the Ras-GAP domain; sequence DRIRPVLSSL…SVMASFLDNI (216 aa). Residues 411-507 enclose the PH domain; that stretch reads TVFKFGNLQQ…WLNAIERQRN (97 aa).

It localises to the cytoplasm. Functionally, GTPase-activating protein, which inhibits the vulval induction by acting as a negative regulator for the member of the Ras family let-60. Probably decreases the signaling activity of Ras by stimulating its intrinsic GTPase activity, thereby lowering the levels of GTP-bound, active Ras. The protein is Ras GTPase-activating protein gap-1 (gap-1) of Caenorhabditis elegans.